Here is a 185-residue protein sequence, read N- to C-terminus: Elongation factor P (185 aa).

The protein belongs to the elongation factor P family.

It is found in the cytoplasm. Its pathway is protein biosynthesis; polypeptide chain elongation. In terms of biological role, involved in peptide bond synthesis. Stimulates efficient translation and peptide-bond synthesis on native or reconstituted 70S ribosomes in vitro. Probably functions indirectly by altering the affinity of the ribosome for aminoacyl-tRNA, thus increasing their reactivity as acceptors for peptidyl transferase. The sequence is that of Elongation factor P from Bacillus cytotoxicus (strain DSM 22905 / CIP 110041 / 391-98 / NVH 391-98).